The sequence spans 103 residues: Large ribosomal subunit protein bL21 (103 aa).

It belongs to the bacterial ribosomal protein bL21 family. In terms of assembly, part of the 50S ribosomal subunit. Contacts protein L20.

This protein binds to 23S rRNA in the presence of protein L20. The polypeptide is Large ribosomal subunit protein bL21 (Pasteurella multocida (strain Pm70)).